We begin with the raw amino-acid sequence, 4814 residues long: Nonribosomal peptide synthetase SIDC (4814 aa).

The interval 21-453 is adenylation 1; sequence PGPTLLHQLV…MKTSGCHGAA (433 aa). One can recognise a Carrier 1 domain in the interval 528-601; it reads DLKKSTEPEL…HLVSSIKIID (74 aa). S562 bears the O-(pantetheine 4'-phosphoryl)serine mark. Residues 637 to 1045 are condensation 1; the sequence is VQDIIPCTNL…SLLESMRSME (409 aa). An adenylation 2 region spans residues 1101-1488; that stretch reads TYTDLNRNAN…SRVSSATAAV (388 aa). Carrier domains follow at residues 1589–1666 and 2134–2210; these read EDWN…HSSH and SSWT…FENG. O-(pantetheine 4'-phosphoryl)serine is present on residues S1626 and S2171. Condensation regions lie at residues 1706-2210 and 2243-2649; these read LQEA…FENG and LPCT…HQHD. Residues 2709–3100 form an adenylation 3 region; it reads TFAQLNSIGN…IRSVKNIHDV (392 aa). Residues 3203–3280 form the Carrier 4 domain; that stretch reads SKDSAGYQKL…DLAVALSTAS (78 aa). The residue at position 3240 (S3240) is an O-(pantetheine 4'-phosphoryl)serine. Residues 3319–3732 form a condensation 4 region; that stretch reads YIYPCSPLQQ…VQVETALVDA (414 aa). The Carrier 5 domain maps to 3747 to 3823; sequence EVWGPAADVL…YLSSLVMRLT (77 aa). S3784 is subject to O-(pantetheine 4'-phosphoryl)serine. The segment at 3857–4258 is condensation 5; sequence DILPTTPLQD…YVLRHAEEDV (402 aa). The region spanning 4295–4368 is the Carrier 6 domain; the sequence is NATSLAIRKV…HMAEQVAALG (74 aa). O-(pantetheine 4'-phosphoryl)serine is present on S4329. Positions 4504-4686 are condensation 6; the sequence is ETLLRLRIHH…HEDMQKITAD (183 aa).

It belongs to the NRP synthetase family. It depends on pantetheine 4'-phosphate as a cofactor.

It functions in the pathway siderophore biosynthesis. Functionally, nonribosomal peptide synthetase; part of the gene cluster that mediates the biosynthesis of at least 11 siderophores, including beauverichelin A, dimerumic acid (DA), Na-dimethyl coprogen (NADC), eleutherazine B, ferricrocin (FC), fusarinine A, fusarinine C (FsC), metachelin A, mevalonolactone, rhodotorulic acid (RA) and tenellin. This cocktail of siderophores for iron metabolism is essential for virulence, and more specifically for the fungal virulence in penetrating through the host cuticle. Siderophore synthesis is also involved in conidial germination under iron-deficient conditions. SIDC catalyzes the assembly of ferricrocin whereas SIDD catalyzes the assembly of fusarinine C. The sequence is that of Nonribosomal peptide synthetase SIDC from Beauveria bassiana (strain ARSEF 2860) (White muscardine disease fungus).